The sequence spans 233 residues: Pathogenesis-related thaumatin-like protein 3.2 (233 aa).

The N-terminal stretch at 1–22 (MARAMHTVWIALVPTLFVFLQG) is a signal peptide. Intrachain disulfides connect Cys-36–Cys-232, Cys-77–Cys-87, Cys-92–Cys-98, Cys-145–Cys-221, Cys-151–Cys-204, Cys-159–Cys-169, Cys-173–Cys-182, and Cys-183–Cys-191. A glycan (N-linked (GlcNAc...) asparagine) is linked at Asn-195.

Belongs to the thaumatin family. Strongly expressed in roots and in female and male strobili, and, to a lower extent, in cotyledons, leaves, stems and pollen grains.

In terms of biological role, may be involved in disease resistance. The protein is Pathogenesis-related thaumatin-like protein 3.2 of Cryptomeria japonica (Japanese cedar).